Reading from the N-terminus, the 145-residue chain is Cytochrome c550 (145 aa).

The first 24 residues, 1–24 (MNKNNVLRGLLVLAGLSLSSLALA), serve as a signal peptide directing secretion. A Cytochrome c domain is found at 60–142 (LAVEIGASAY…AIRSYLESVH (83 aa)). Cys-73, Cys-76, His-77, and Met-119 together coordinate heme c.

In terms of assembly, monomer. Interacts with the quinoprotein ethanol dehydrogenase (QEDH) ExaA. Post-translationally, binds 1 heme group per subunit.

Its subcellular location is the periplasm. The protein operates within alcohol metabolism; ethanol degradation; acetate from ethanol. Its function is as follows. Is an essential component of the ethanol oxidation system that allows P.aeruginosa to grow on ethanol as the sole carbon and energy source. Is the direct electron acceptor of the quinoprotein ethanol dehydrogenase (QEDH). This is Cytochrome c550 from Pseudomonas aeruginosa (strain ATCC 15692 / DSM 22644 / CIP 104116 / JCM 14847 / LMG 12228 / 1C / PRS 101 / PAO1).